Consider the following 176-residue polypeptide: Protein KleF (176 aa).

This is Protein KleF (kleF) from Escherichia coli.